The primary structure comprises 218 residues: Probable cutinase 3 (218 aa).

Residues 1–17 (MSLRSVLVAALAALAVA) form the signal peptide. Cystine bridges form between Cys41–Cys120 and Cys67–Cys81. Ser131 serves as the catalytic Nucleophile. A disulfide bond links Cys182 and Cys189. The active site involves Asp186. Residue His199 is the Proton donor/acceptor of the active site.

This sequence belongs to the cutinase family.

The protein localises to the secreted. It carries out the reaction cutin + H2O = cutin monomers.. In terms of biological role, catalyzes the hydrolysis of complex carboxylic polyesters found in the cell wall of plants. Degrades cutin, a macromolecule that forms the structure of the plant cuticle. The protein is Probable cutinase 3 of Aspergillus terreus (strain NIH 2624 / FGSC A1156).